A 469-amino-acid polypeptide reads, in one-letter code: Light-independent protochlorophyllide reductase subunit N (469 aa).

The [4Fe-4S] cluster site is built by cysteine 24, cysteine 49, and cysteine 109.

This sequence belongs to the BchN/ChlN family. In terms of assembly, protochlorophyllide reductase is composed of three subunits; ChlL, ChlN and ChlB. Forms a heterotetramer of two ChlB and two ChlN subunits. [4Fe-4S] cluster serves as cofactor.

It catalyses the reaction chlorophyllide a + oxidized 2[4Fe-4S]-[ferredoxin] + 2 ADP + 2 phosphate = protochlorophyllide a + reduced 2[4Fe-4S]-[ferredoxin] + 2 ATP + 2 H2O. The protein operates within porphyrin-containing compound metabolism; chlorophyll biosynthesis (light-independent). Its function is as follows. Component of the dark-operative protochlorophyllide reductase (DPOR) that uses Mg-ATP and reduced ferredoxin to reduce ring D of protochlorophyllide (Pchlide) to form chlorophyllide a (Chlide). This reaction is light-independent. The NB-protein (ChlN-ChlB) is the catalytic component of the complex. In Gloeobacter violaceus (strain ATCC 29082 / PCC 7421), this protein is Light-independent protochlorophyllide reductase subunit N.